Reading from the N-terminus, the 295-residue chain is Bifunctional protein FolD (295 aa).

NADP(+) is bound by residues 167-169, serine 192, and isoleucine 233; that span reads GRS.

The protein belongs to the tetrahydrofolate dehydrogenase/cyclohydrolase family. Homodimer.

It carries out the reaction (6R)-5,10-methylene-5,6,7,8-tetrahydrofolate + NADP(+) = (6R)-5,10-methenyltetrahydrofolate + NADPH. It catalyses the reaction (6R)-5,10-methenyltetrahydrofolate + H2O = (6R)-10-formyltetrahydrofolate + H(+). The protein operates within one-carbon metabolism; tetrahydrofolate interconversion. Catalyzes the oxidation of 5,10-methylenetetrahydrofolate to 5,10-methenyltetrahydrofolate and then the hydrolysis of 5,10-methenyltetrahydrofolate to 10-formyltetrahydrofolate. The chain is Bifunctional protein FolD from Paramagnetospirillum magneticum (strain ATCC 700264 / AMB-1) (Magnetospirillum magneticum).